The following is a 544-amino-acid chain: Chaperonin GroEL (544 aa).

ATP-binding positions include 29 to 32 (TLGP), 86 to 90 (DGTTT), G413, 478 to 480 (NAA), and D494.

It belongs to the chaperonin (HSP60) family. Forms a cylinder of 14 subunits composed of two heptameric rings stacked back-to-back. Interacts with the co-chaperonin GroES.

It is found in the cytoplasm. It carries out the reaction ATP + H2O + a folded polypeptide = ADP + phosphate + an unfolded polypeptide.. Functionally, together with its co-chaperonin GroES, plays an essential role in assisting protein folding. The GroEL-GroES system forms a nano-cage that allows encapsulation of the non-native substrate proteins and provides a physical environment optimized to promote and accelerate protein folding. The sequence is that of Chaperonin GroEL from Lysinibacillus sphaericus (strain C3-41).